The following is a 20-amino-acid chain: Methyl-coenzyme M reductase subunit gamma (20 aa).

Residues 1–20 (AYERQFYPGATSVAENNIGH) form a disordered region.

This sequence belongs to the methyl-coenzyme M reductase gamma subunit family. In terms of assembly, MCR from M.thermophila is a heterotrimer composed of an alpha, a beta, and a gamma subunit. The cofactor is coenzyme F430.

It is found in the cytoplasm. It catalyses the reaction coenzyme B + methyl-coenzyme M = methane + coenzyme M-coenzyme B heterodisulfide. It participates in one-carbon metabolism; methyl-coenzyme M reduction; methane from methyl-coenzyme M: step 1/1. Its function is as follows. Component of the methyl-coenzyme M reductase (MCR) I that catalyzes the reductive cleavage of methyl-coenzyme M (CoM-S-CH3 or 2-(methylthio)ethanesulfonate) using coenzyme B (CoB or 7-mercaptoheptanoylthreonine phosphate) as reductant which results in the production of methane and the mixed heterodisulfide of CoB and CoM (CoM-S-S-CoB). This is the final step in methanogenesis. The sequence is that of Methyl-coenzyme M reductase subunit gamma from Methanosarcina thermophila.